The following is a 263-amino-acid chain: Receptor-transporting protein 1 (263 aa).

The Cytoplasmic segment spans residues 1–238 (MRIFRPWRLR…ETGSGWNFCS (238 aa)). The segment at 88-197 (ASGRFHCSWC…GEFCEACQEG (110 aa)) adopts a 3CxxC-type zinc-finger fold. A helical membrane pass occupies residues 239 to 259 (IPWCLFWATVLLLIIYLQLSF). Over 260–263 (RSSV) the chain is Extracellular.

The protein belongs to the TMEM7 family. Interacts with olfactory receptors.

The protein resides in the cell membrane. Functionally, specifically promotes functional cell surface expression of olfactory receptors, but not of other GPCRs. The chain is Receptor-transporting protein 1 (RTP1) from Macaca fascicularis (Crab-eating macaque).